Consider the following 340-residue polypeptide: DNA polymerase III subunit delta' (340 aa).

The DNA polymerase holoenzyme is a complex that contains 10 different types of subunits. These subunits are organized into 3 functionally essential subassemblies: the pol III core, the beta sliding clamp processivity factor and the clamp-loading complex. The pol III core (subunits alpha,epsilon and theta) contains the polymerase and the 3'-5' exonuclease proofreading activities. The polymerase is tethered to the template via the sliding clamp processivity factor. The clamp-loading complex assembles the beta processivity factor onto the primer template and plays a central role in the organization and communication at the replication fork. This complex contains delta, delta', psi and chi, and copies of either or both of two different DnaX proteins, gamma and tau. The composition of the holoenzyme is, therefore: (alpha,epsilon,theta)[2]-(gamma/tau)[3]-delta,delta', psi,chi-beta[4].

It carries out the reaction DNA(n) + a 2'-deoxyribonucleoside 5'-triphosphate = DNA(n+1) + diphosphate. DNA polymerase III is a complex, multichain enzyme responsible for most of the replicative synthesis in bacteria. This DNA polymerase also exhibits 3' to 5' exonuclease activity. The polypeptide is DNA polymerase III subunit delta' (holB) (Yersinia pestis).